The primary structure comprises 219 residues: Protein matrimony (219 aa).

Residues 74-99 show a composition bias toward basic residues; sequence PPAKAHPHPHQHQHHHHHHKHIHRTQ. Residues 74-104 are disordered; the sequence is PPAKAHPHPHQHQHHHHHHKHIHRTQLKPPP. Residues 159-219 enclose the SAM domain; the sequence is NHAANVEQIL…NRIMDVLQTL (61 aa).

As to quaternary structure, interacts with polo. Interacts with cort. Post-translationally, probably ubiquitinated: degraded during the oocyte-to-embryo transition by the anaphase promoting complex/cyclosome (APC/C) containing cort protein.

It localises to the nucleus. The protein resides in the chromosome. In terms of biological role, polo kinase inhibitor required to maintain G2 arrest in the meiotic cell cycle in females. Holds heterochromatically paired homologs together from the end of pachytene until metaphase I. Haploinsufficient locus for homologous achiasmate segregation and may be required for the maintenance of heterochromatic pairings. The protein is Protein matrimony (mtrm) of Drosophila yakuba (Fruit fly).